A 107-amino-acid chain; its full sequence is NADH-quinone oxidoreductase subunit K (107 aa).

3 helical membrane passes run 11 to 31, 36 to 56, and 67 to 87; these read LTHY…GVLL, IVLL…FVAF, and IMVF…LALA.

This sequence belongs to the complex I subunit 4L family. As to quaternary structure, NDH-1 is composed of 14 different subunits. Subunits NuoA, H, J, K, L, M, N constitute the membrane sector of the complex.

It localises to the cell inner membrane. It carries out the reaction a quinone + NADH + 5 H(+)(in) = a quinol + NAD(+) + 4 H(+)(out). Its function is as follows. NDH-1 shuttles electrons from NADH, via FMN and iron-sulfur (Fe-S) centers, to quinones in the respiratory chain. The immediate electron acceptor for the enzyme in this species is believed to be ubiquinone. Couples the redox reaction to proton translocation (for every two electrons transferred, four hydrogen ions are translocated across the cytoplasmic membrane), and thus conserves the redox energy in a proton gradient. This is NADH-quinone oxidoreductase subunit K from Bdellovibrio bacteriovorus (strain ATCC 15356 / DSM 50701 / NCIMB 9529 / HD100).